The primary structure comprises 101 residues: Large ribosomal subunit protein bL21 (101 aa).

This sequence belongs to the bacterial ribosomal protein bL21 family. Part of the 50S ribosomal subunit. Contacts protein L20.

Functionally, this protein binds to 23S rRNA in the presence of protein L20. The protein is Large ribosomal subunit protein bL21 of Beutenbergia cavernae (strain ATCC BAA-8 / DSM 12333 / CCUG 43141 / JCM 11478 / NBRC 16432 / NCIMB 13614 / HKI 0122).